Here is a 262-residue protein sequence, read N- to C-terminus: NAD-dependent protein deacylase (262 aa).

Residues 1–262 enclose the Deacetylase sirtuin-type domain; the sequence is MSNLRRAAEA…AALSPPGVPT (262 aa). 22-42 lines the NAD(+) pocket; sequence GAGISADSGIPTFRDKLTGLW. Substrate is bound by residues Tyr67 and Arg70. 101-104 is an NAD(+) binding site; sequence QNID. His119 serves as the catalytic Proton acceptor. Zn(2+) is bound by residues Cys127, Cys130, Cys155, and Cys158. NAD(+)-binding positions include 195-197, 221-223, and Ala239; these read GTS and NLE.

Belongs to the sirtuin family. Class III subfamily. Zn(2+) is required as a cofactor.

The protein resides in the cytoplasm. The enzyme catalyses N(6)-acetyl-L-lysyl-[protein] + NAD(+) + H2O = 2''-O-acetyl-ADP-D-ribose + nicotinamide + L-lysyl-[protein]. It carries out the reaction N(6)-succinyl-L-lysyl-[protein] + NAD(+) + H2O = 2''-O-succinyl-ADP-D-ribose + nicotinamide + L-lysyl-[protein]. NAD-dependent lysine deacetylase and desuccinylase that specifically removes acetyl and succinyl groups on target proteins. Modulates the activities of several proteins which are inactive in their acylated form. The polypeptide is NAD-dependent protein deacylase (Pseudomonas putida (strain ATCC 47054 / DSM 6125 / CFBP 8728 / NCIMB 11950 / KT2440)).